Reading from the N-terminus, the 144-residue chain is Large ribosomal subunit protein uL13 (144 aa).

Residues 125 to 144 (YRGPEHPHQAQKPQPLEVKA) are disordered.

This sequence belongs to the universal ribosomal protein uL13 family. Part of the 50S ribosomal subunit.

Functionally, this protein is one of the early assembly proteins of the 50S ribosomal subunit, although it is not seen to bind rRNA by itself. It is important during the early stages of 50S assembly. The protein is Large ribosomal subunit protein uL13 of Aquifex aeolicus (strain VF5).